A 262-amino-acid polypeptide reads, in one-letter code: Small ribosomal subunit protein uS3 (262 aa).

The KH type-2 domain occupies Val-39–Arg-107. The segment at Asn-211–Glu-262 is disordered. Basic and acidic residues predominate over residues Glu-221–Gly-239.

Belongs to the universal ribosomal protein uS3 family. Part of the 30S ribosomal subunit. Forms a tight complex with proteins S10 and S14.

Functionally, binds the lower part of the 30S subunit head. Binds mRNA in the 70S ribosome, positioning it for translation. This is Small ribosomal subunit protein uS3 from Ralstonia pickettii (strain 12J).